The primary structure comprises 103 residues: Large ribosomal subunit protein uL24 (103 aa).

It belongs to the universal ribosomal protein uL24 family. In terms of assembly, part of the 50S ribosomal subunit.

Its function is as follows. One of two assembly initiator proteins, it binds directly to the 5'-end of the 23S rRNA, where it nucleates assembly of the 50S subunit. One of the proteins that surrounds the polypeptide exit tunnel on the outside of the subunit. The sequence is that of Large ribosomal subunit protein uL24 from Bacillus anthracis (strain A0248).